Reading from the N-terminus, the 246-residue chain is Probable septum site-determining protein MinC (246 aa).

Belongs to the MinC family. Interacts with MinD and FtsZ.

Functionally, cell division inhibitor that blocks the formation of polar Z ring septums. Rapidly oscillates between the poles of the cell to destabilize FtsZ filaments that have formed before they mature into polar Z rings. Prevents FtsZ polymerization. The polypeptide is Probable septum site-determining protein MinC (Pseudomonas savastanoi pv. phaseolicola (strain 1448A / Race 6) (Pseudomonas syringae pv. phaseolicola (strain 1448A / Race 6))).